Consider the following 293-residue polypeptide: Probable E3 ubiquitin-protein ligase RNF144A-A (293 aa).

Residues 16–237 are TRIAD supradomain; that stretch reads PLVSCKLCLG…YDKGPCRNKL (222 aa). Positions 20, 23, 43, 46, 111, 116, 135, 138, 143, 146, 151, 156, 186, and 189 each coordinate Zn(2+). Residues 20 to 70 form an RING-type 1 zinc finger; the sequence is CKLCLGEFPLEQMTTITQCQCVFCTMCLKQYVELLIKEGFETAISCPDSAC. The IBR-type zinc-finger motif lies at 91-156; the sequence is QRYRKLQFEK…KASWHPDQDC (66 aa). The RING-type 2; atypical zinc finger occupies 186 to 215; sequence CPKCKVYIERDEGCAQMMCKNCKHAFCWYC. Cys199 is an active-site residue. Zn(2+)-binding residues include Cys204, Cys207, Cys212, Cys215, His227, and Cys233. The helical transmembrane segment at 251-271 threads the bilayer; the sequence is VVGIFAGFGLLLLVASPFLLL.

It belongs to the RBR family. RNF144 subfamily.

Its subcellular location is the membrane. It carries out the reaction [E2 ubiquitin-conjugating enzyme]-S-ubiquitinyl-L-cysteine + [acceptor protein]-L-lysine = [E2 ubiquitin-conjugating enzyme]-L-cysteine + [acceptor protein]-N(6)-ubiquitinyl-L-lysine.. It functions in the pathway protein modification; protein ubiquitination. E3 ubiquitin-protein ligase which accepts ubiquitin from E2 ubiquitin-conjugating enzymes ube2l3 and ube2l6 in the form of a thioester and then directly transfers the ubiquitin to targeted substrates. This is Probable E3 ubiquitin-protein ligase RNF144A-A (rnf144aa) from Danio rerio (Zebrafish).